The sequence spans 379 residues: Putative glutamate--cysteine ligase 2 (379 aa).

Belongs to the glutamate--cysteine ligase type 2 family. YbdK subfamily.

The catalysed reaction is L-cysteine + L-glutamate + ATP = gamma-L-glutamyl-L-cysteine + ADP + phosphate + H(+). In terms of biological role, ATP-dependent carboxylate-amine ligase which exhibits weak glutamate--cysteine ligase activity. This Roseiflexus sp. (strain RS-1) protein is Putative glutamate--cysteine ligase 2.